Here is a 180-residue protein sequence, read N- to C-terminus: Protein GrpE (180 aa).

The segment at 1–21 is disordered; that stretch reads MSEEVKEQNLPEVEPVQEAAS.

Belongs to the GrpE family. In terms of assembly, homodimer.

Its subcellular location is the cytoplasm. Its function is as follows. Participates actively in the response to hyperosmotic and heat shock by preventing the aggregation of stress-denatured proteins, in association with DnaK and GrpE. It is the nucleotide exchange factor for DnaK and may function as a thermosensor. Unfolded proteins bind initially to DnaJ; upon interaction with the DnaJ-bound protein, DnaK hydrolyzes its bound ATP, resulting in the formation of a stable complex. GrpE releases ADP from DnaK; ATP binding to DnaK triggers the release of the substrate protein, thus completing the reaction cycle. Several rounds of ATP-dependent interactions between DnaJ, DnaK and GrpE are required for fully efficient folding. This chain is Protein GrpE, found in Campylobacter concisus (strain 13826).